We begin with the raw amino-acid sequence, 100 residues long: Urease subunit gamma (100 aa).

The protein belongs to the urease gamma subunit family. In terms of assembly, heterotrimer of UreA (gamma), UreB (beta) and UreC (alpha) subunits. Three heterotrimers associate to form the active enzyme.

The protein resides in the cytoplasm. It carries out the reaction urea + 2 H2O + H(+) = hydrogencarbonate + 2 NH4(+). It functions in the pathway nitrogen metabolism; urea degradation; CO(2) and NH(3) from urea (urease route): step 1/1. The sequence is that of Urease subunit gamma from Nitrosospira multiformis (strain ATCC 25196 / NCIMB 11849 / C 71).